Here is a 2091-residue protein sequence, read N- to C-terminus: Protein Ycf2 (2091 aa).

Residues 191 to 210 (DSSQLKGSSDQSRDPLDSIS) are disordered. Position 1432 to 1439 (1432 to 1439 (GSIGTGRS)) interacts with ATP.

Belongs to the Ycf2 family.

The protein localises to the plastid. It localises to the chloroplast stroma. In terms of biological role, probable ATPase of unknown function. Its presence in a non-photosynthetic plant (Epifagus virginiana) and experiments in tobacco indicate that it has an essential function which is probably not related to photosynthesis. In Daucus carota (Wild carrot), this protein is Protein Ycf2.